A 349-amino-acid polypeptide reads, in one-letter code: GTPase Obg (349 aa).

Residues 1-159 (MKFLDEAKVY…RWIWLRLKLI (159 aa)) form the Obg domain. The 168-residue stretch at 160–327 (ADAGLVGLPN…ALRALVAVIG (168 aa)) folds into the OBG-type G domain. GTP is bound by residues 166-173 (GLPNAGKS), 191-195 (FTTLH), 212-215 (DIPG), 279-282 (NKID), and 308-310 (SGV). Mg(2+)-binding residues include serine 173 and threonine 193.

This sequence belongs to the TRAFAC class OBG-HflX-like GTPase superfamily. OBG GTPase family. Monomer. Mg(2+) is required as a cofactor.

It localises to the cytoplasm. In terms of biological role, an essential GTPase which binds GTP, GDP and possibly (p)ppGpp with moderate affinity, with high nucleotide exchange rates and a fairly low GTP hydrolysis rate. Plays a role in control of the cell cycle, stress response, ribosome biogenesis and in those bacteria that undergo differentiation, in morphogenesis control. The chain is GTPase Obg from Rhodopseudomonas palustris (strain BisA53).